The sequence spans 308 residues: Vomeronasal type-1 receptor 92 (308 aa).

At 1 to 18 (MNKDNTLHTIMKITMFSE) the chain is on the extracellular side. The helical transmembrane segment at 19-39 (VSVGISANSILFFAHLCMLLG) threads the bilayer. Over 40 to 48 (ENRPKPFHL) the chain is Cytoplasmic. A helical membrane pass occupies residues 49–69 (YIVSLSLTQLILLITMGLIAV). The Extracellular segment spans residues 70–91 (DMFMSWGRWDSTPCQSLIYLHR). Cys83 and Cys170 are disulfide-bonded. A helical membrane pass occupies residues 92–112 (LLRGFTLCAACLLNVFWMITL). Residues 113–132 (SPRSSCLSKFKHNSPHHISG) lie on the Cytoplasmic side of the membrane. Residues 133–153 (AFLFLCVLYMSFSSHLLVSII) form a helical membrane-spanning segment. Topologically, residues 154–188 (ATPNLTSNIFMYVTQSCSLLPMSYSRTSTFSTTIA) are extracellular. Asn157 is a glycosylation site (N-linked (GlcNAc...) asparagine). Residues 189 to 209 (IREAFLISLMALSSGFMVTLL) traverse the membrane as a helical segment. Topologically, residues 210–236 (WRHKKQAQHLHSTSLSSKASPERRATR) are cytoplasmic. Residues 237 to 257 (TILLLMSFFVVLYILENVVFY) traverse the membrane as a helical segment. The Extracellular segment spans residues 258 to 267 (SRMKFKDGSM). Residues 268-288 (FYCVQIIVSHSYATISPFVFI) form a helical membrane-spanning segment. The Cytoplasmic portion of the chain corresponds to 289 to 308 (CTEKHMTKILRSVCTRIINI).

Belongs to the G-protein coupled receptor 1 family.

The protein localises to the cell membrane. Putative pheromone receptor implicated in the regulation of social as well as reproductive behavior. The sequence is that of Vomeronasal type-1 receptor 92 (Vom1r92) from Rattus norvegicus (Rat).